A 260-amino-acid chain; its full sequence is Small ribosomal subunit protein uS2 (260 aa).

Residues 240–260 (VLKPKLPYQPNRRPYQETVKK) form a disordered region.

This sequence belongs to the universal ribosomal protein uS2 family.

This is Small ribosomal subunit protein uS2 from Phytoplasma australiense.